We begin with the raw amino-acid sequence, 281 residues long: 18S rRNA (guanine-N(7))-methyltransferase (281 aa).

The interval lysine 256–phenylalanine 281 is disordered.

The protein belongs to the class I-like SAM-binding methyltransferase superfamily. BUD23/WBSCR22 family. In terms of assembly, heterodimer with TRMT112; this heterodimerization is necessary for the metabolic stability and activity of the catalytic subunit BUD23. Interacts with GRIP1. Post-translationally, may be ubiquitinated and targeted to degradation in response to pro-inflammatory cytokine signaling.

Its subcellular location is the nucleus. It is found in the nucleoplasm. It localises to the cytoplasm. The protein resides in the perinuclear region. It carries out the reaction a guanosine in 18S rRNA + S-adenosyl-L-methionine = an N(7)-methylguanosine in 18S rRNA + S-adenosyl-L-homocysteine. Functionally, S-adenosyl-L-methionine-dependent methyltransferase that specifically methylates the N(7) position of a guanine in 18S rRNA. Requires the methyltransferase adapter protein TRM112 for full rRNA methyltransferase activity. Involved in the pre-rRNA processing steps leading to small-subunit rRNA production independently of its RNA-modifying catalytic activity. Important for biogenesis end export of the 40S ribosomal subunit independent on its methyltransferase activity. Locus-specific steroid receptor coactivator. Potentiates transactivation by glucocorticoid (NR3C1), mineralocorticoid (NR3C2), androgen (AR) and progesterone (PGR) receptors. Required for the maintenance of open chromatin at the TSC22D3/GILZ locus to facilitate NR3C1 loading on the response elements. Required for maintenance of dimethylation on histone H3 'Lys-79' (H3K79me2), although direct histone methyltransferase activity is not observed in vitro. The polypeptide is 18S rRNA (guanine-N(7))-methyltransferase (Bos taurus (Bovine)).